Reading from the N-terminus, the 318-residue chain is Na(+)-translocating NADH-quinone reductase subunit C (318 aa).

The helical transmembrane segment at 13 to 33 threads the bilayer; sequence WYIILFIFVLSLVAGTLLSSV. An FMN phosphoryl threonine modification is found at T281.

This sequence belongs to the NqrC family. As to quaternary structure, composed of six subunits; NqrA, NqrB, NqrC, NqrD, NqrE and NqrF. FMN serves as cofactor.

The protein localises to the cell inner membrane. It carries out the reaction a ubiquinone + n Na(+)(in) + NADH + H(+) = a ubiquinol + n Na(+)(out) + NAD(+). Its function is as follows. NQR complex catalyzes the reduction of ubiquinone-1 to ubiquinol by two successive reactions, coupled with the transport of Na(+) ions from the cytoplasm to the periplasm. NqrA to NqrE are probably involved in the second step, the conversion of ubisemiquinone to ubiquinol. The protein is Na(+)-translocating NADH-quinone reductase subunit C of Chlamydia muridarum (strain MoPn / Nigg).